We begin with the raw amino-acid sequence, 406 residues long: Putative nickel insertion protein (406 aa).

It belongs to the LarC family.

This is Putative nickel insertion protein from Thermomicrobium roseum (strain ATCC 27502 / DSM 5159 / P-2).